Consider the following 440-residue polypeptide: Trigger factor (440 aa).

One can recognise a PPIase FKBP-type domain in the interval 161 to 257 (GDYVKLAYEG…VLEVRERVLP (97 aa)).

The protein belongs to the FKBP-type PPIase family. Tig subfamily.

The protein resides in the cytoplasm. The catalysed reaction is [protein]-peptidylproline (omega=180) = [protein]-peptidylproline (omega=0). Its function is as follows. Involved in protein export. Acts as a chaperone by maintaining the newly synthesized protein in an open conformation. Functions as a peptidyl-prolyl cis-trans isomerase. The polypeptide is Trigger factor (Opitutus terrae (strain DSM 11246 / JCM 15787 / PB90-1)).